The sequence spans 785 residues: Cadherin-7 (785 aa).

The signal sequence occupies residues Met-1–Ala-27. The propeptide occupies Glu-28–Arg-47. The Extracellular segment spans residues Glu-28–Thr-607. Cadherin domains follow at residues Trp-49 to Phe-153, Leu-154 to Phe-262, Pro-263 to Phe-377, Ser-378 to Phe-482, and Phe-482 to Tyr-599. Residues Asn-449 and Asn-530 are each glycosylated (N-linked (GlcNAc...) asparagine). A helical transmembrane segment spans residues Gly-608–Val-628. Over Thr-629–Ser-785 the chain is Cytoplasmic.

It is found in the cell membrane. Cadherins are calcium-dependent cell adhesion proteins. They preferentially interact with themselves in a homophilic manner in connecting cells; cadherins may thus contribute to the sorting of heterogeneous cell types. This is Cadherin-7 (Cdh7) from Mus musculus (Mouse).